The primary structure comprises 463 residues: GTPase Der (463 aa).

EngA-type G domains follow at residues 2–164 and 198–369; these read KKII…PKSK and IKIG…KNYT. Residues 8–15, 55–59, 116–119, 204–211, 251–255, and 315–318 each bind GTP; these read GRPNVGKS, DSGGL, NKVD, GRVNVGKS, DTAGI, and NKWD. The 85-residue stretch at 370 to 454 folds into the KH-like domain; it reads QKMKTSRLNE…PVILIPKNRS (85 aa).

Belongs to the TRAFAC class TrmE-Era-EngA-EngB-Septin-like GTPase superfamily. EngA (Der) GTPase family. Associates with the 50S ribosomal subunit.

GTPase that plays an essential role in the late steps of ribosome biogenesis. The sequence is that of GTPase Der from Campylobacter fetus subsp. fetus (strain 82-40).